The following is an 801-amino-acid chain: Na(+)/H(+) antiporter subunit A1 (801 aa).

19 helical membrane-spanning segments follow: residues 1-21, 28-48, 79-99, 117-137, 166-186, 206-226, 265-285, 300-320, 337-357, 373-393, 427-447, 472-492, 522-542, 591-611, 623-643, 646-666, 671-691, 707-727, and 764-784; these read MSLLHIAVILPLIFVLIIPIL, IHLGWFVLPVPIVIFIYMLTL, LGLLFSLLISGIGSLVVLYSI, LFMGAMLGVVLSDNVIILYLF, LIITVFGGLSLLGGIILLAIP, PFFIFAMILIMIGAFTKSAQF, IFAASQGWIWTVTLVGLITLF, ILAFSTVSQLGMIMAMLGIGA, FTAAIFHLINHATFKGALFMI, LGGLLTIMPISFTITVITALS, LGYLFPIIGIVGSVFTFVYSI, ILMLLSPAILATLVIVFGLFP, GLTPAFLSTLVIYILGILLIV, LVIIFGALILLTFVTVFSVPF, IFEVCIVILLLSAAFLILFAK, LFNIIMLSAVGYAVSVLFIFF, LALTQFVVESISTALFLLCFY, LTNALIAGGVGLSVIIIGLIA, and MDTLFESSVLGIAGLAVYTMI.

The protein belongs to the CPA3 antiporters (TC 2.A.63) subunit A family. May form a heterooligomeric complex that consists of seven subunits: mnhA1, mnhB1, mnhC1, mnhD1, mnhE1, mnhF1 and mnhG1.

The protein resides in the cell membrane. Its function is as follows. Mnh complex is a Na(+)/H(+) antiporter involved in Na(+) excretion. This Staphylococcus aureus (strain bovine RF122 / ET3-1) protein is Na(+)/H(+) antiporter subunit A1 (mnhA1).